The following is a 398-amino-acid chain: Bifunctional enzyme IspD/IspF (398 aa).

A 2-C-methyl-D-erythritol 4-phosphate cytidylyltransferase region spans residues 1-237 (MSISIAAIIL…QKKMQMFPDI (237 aa)). The segment at 238–398 (RVGNGYDVHS…SVLYPGEIPQ (161 aa)) is 2-C-methyl-D-erythritol 2,4-cyclodiphosphate synthase. A divalent metal cation is bound by residues Asp-244 and His-246. 4-CDP-2-C-methyl-D-erythritol 2-phosphate-binding positions include 244 to 246 (DVH) and 270 to 271 (HS). His-278 contributes to the a divalent metal cation binding site. Residues 292-294 (DIG), 368-371 (TTNE), Phe-375, and Arg-378 each bind 4-CDP-2-C-methyl-D-erythritol 2-phosphate.

This sequence in the N-terminal section; belongs to the IspD/TarI cytidylyltransferase family. IspD subfamily. In the C-terminal section; belongs to the IspF family. Requires a divalent metal cation as cofactor.

It catalyses the reaction 2-C-methyl-D-erythritol 4-phosphate + CTP + H(+) = 4-CDP-2-C-methyl-D-erythritol + diphosphate. It carries out the reaction 4-CDP-2-C-methyl-D-erythritol 2-phosphate = 2-C-methyl-D-erythritol 2,4-cyclic diphosphate + CMP. Its pathway is isoprenoid biosynthesis; isopentenyl diphosphate biosynthesis via DXP pathway; isopentenyl diphosphate from 1-deoxy-D-xylulose 5-phosphate: step 2/6. The protein operates within isoprenoid biosynthesis; isopentenyl diphosphate biosynthesis via DXP pathway; isopentenyl diphosphate from 1-deoxy-D-xylulose 5-phosphate: step 4/6. Bifunctional enzyme that catalyzes the formation of 4-diphosphocytidyl-2-C-methyl-D-erythritol from CTP and 2-C-methyl-D-erythritol 4-phosphate (MEP) (IspD), and catalyzes the conversion of 4-diphosphocytidyl-2-C-methyl-D-erythritol 2-phosphate (CDP-ME2P) to 2-C-methyl-D-erythritol 2,4-cyclodiphosphate (ME-CPP) with a corresponding release of cytidine 5-monophosphate (CMP) (IspF). The chain is Bifunctional enzyme IspD/IspF from Bartonella tribocorum (strain CIP 105476 / IBS 506).